The sequence spans 238 residues: Probable transcriptional regulatory protein YeeN (238 aa).

This sequence belongs to the TACO1 family. YeeN subfamily.

It localises to the cytoplasm. This is Probable transcriptional regulatory protein YeeN from Shigella flexneri.